The chain runs to 405 residues: MYTPPRWNNKALKWFDERLPVLTVAHKELVVYPAPRNLNYFWNFGSLAGIAMIIMIATGIFLAMSYTAHVDHAFDSVERIMRDVNYGWLMRYMHANGASMFFIVVYVHMFRGLYYGSYKPPREVLWWLGLVILLLMMATAFMGYVLPWGQMSFWGATVITNLFSAIPVVGDDIVTLLWGGFSVDNPTLNRFFSLHYLFPMLLFAVVFLHMWALHVKKSNNPLGIDAKGPFDTIPFHPYYTVKDAFGLGIFLMVFCFFVFFAPNFFGEPDNYIPANPMVTPTHIVPEWYFLPFYAILRAVPDKLGGVLAMFGAILILFVLPWLDTSKVRSATFRPVFKGFFWVFLADCLLLGYLGAMPAEEPYVTITQLATIYYFLHFLVITPLVGWFEKPKPLPVSISSPVTTQA.

Residues 44-64 (FGSLAGIAMIIMIATGIFLAM) form a helical membrane-spanning segment. Residues H94 and H108 each contribute to the heme b site. 8 consecutive transmembrane segments (helical) span residues 97 to 117 (GASM…YYGS), 124 to 144 (VLWW…FMGY), 163 to 183 (FSAI…GFSV), 191 to 211 (FFSL…LHMW), 245 to 265 (FGLG…PNFF), 303 to 323 (LGGV…PWLD), 338 to 358 (GFFW…AMPA), and 368 to 388 (LATI…GWFE). Positions 195 and 209 each coordinate heme b.

The protein belongs to the cytochrome b family. The main subunits of complex b-c1 are: cytochrome b, cytochrome c1 and the Rieske protein. It depends on heme b as a cofactor.

It is found in the cell membrane. Its function is as follows. Component of the ubiquinol-cytochrome c reductase complex (complex III or cytochrome b-c1 complex), which is a respiratory chain that generates an electrochemical potential coupled to ATP synthesis. In Rhodospirillum rubrum, this protein is Cytochrome b (petB).